The chain runs to 394 residues: Elongation factor Tu (394 aa).

Residues 10-204 (KPHVNVGTIG…ALDSYIPEPQ (195 aa)) enclose the tr-type G domain. The G1 stretch occupies residues 19 to 26 (GHVDHGKT). Position 19–26 (19–26 (GHVDHGKT)) interacts with GTP. T26 provides a ligand contact to Mg(2+). Residues 60–64 (GITIN) are G2. The segment at 81-84 (DCPG) is G3. GTP contacts are provided by residues 81–85 (DCPGH) and 136–139 (NKCD). A G4 region spans residues 136 to 139 (NKCD). The interval 174–176 (SAL) is G5.

This sequence belongs to the TRAFAC class translation factor GTPase superfamily. Classic translation factor GTPase family. EF-Tu/EF-1A subfamily. Monomer.

The protein localises to the cytoplasm. It catalyses the reaction GTP + H2O = GDP + phosphate + H(+). In terms of biological role, GTP hydrolase that promotes the GTP-dependent binding of aminoacyl-tRNA to the A-site of ribosomes during protein biosynthesis. The polypeptide is Elongation factor Tu (Shewanella putrefaciens (Pseudomonas putrefaciens)).